Consider the following 537-residue polypeptide: Glucose-6-phosphate isomerase (537 aa).

E341 acts as the Proton donor in catalysis. Catalysis depends on residues H372 and K501.

Belongs to the GPI family.

Its subcellular location is the cytoplasm. It catalyses the reaction alpha-D-glucose 6-phosphate = beta-D-fructose 6-phosphate. It participates in carbohydrate biosynthesis; gluconeogenesis. It functions in the pathway carbohydrate degradation; glycolysis; D-glyceraldehyde 3-phosphate and glycerone phosphate from D-glucose: step 2/4. Functionally, catalyzes the reversible isomerization of glucose-6-phosphate to fructose-6-phosphate. This Jannaschia sp. (strain CCS1) protein is Glucose-6-phosphate isomerase.